The sequence spans 696 residues: Gametogenetin-binding protein 2 (696 aa).

Residues S360 and S602 each carry the phosphoserine modification.

Interacts with isoform 1 of GGN. As to expression, testis-specific.

The protein resides in the cytoplasmic vesicle. Functionally, may be involved in spermatogenesis. The sequence is that of Gametogenetin-binding protein 2 (Ggnbp2) from Mus musculus (Mouse).